The following is a 477-amino-acid chain: Proton-coupled amino acid transporter 3 (477 aa).

A compositionally biased stretch (basic and acidic residues) spans 1–13 (MGKTPLLREDGRC). A disordered region spans residues 1 to 42 (MGKTPLLREDGRCQRNTFGGSKASSKGSSSSSSNNTVSSKKK). Residues 1–54 (MGKTPLLREDGRCQRNTFGGSKASSKGSSSSSSNNTVSSKKKPRRKADALMFIQ) lie on the Cytoplasmic side of the membrane. Residues 19 to 38 (GGSKASSKGSSSSSSNNTVS) show a composition bias toward low complexity. Residues 55–75 (IFIHLLKSNIGTGFLGLPLAV) traverse the membrane as a helical segment. Residues 76–77 (KN) lie on the Extracellular side of the membrane. A helical transmembrane segment spans residues 78 to 98 (AGLLVGPVSLLAIGALTVHCM). The Cytoplasmic segment spans residues 99–144 (DILLNCACHLTSRLQRSFVNYEETTMYSLETCPSPWLRTHSVWGRY). Residues 145-165 (VVSFLLIVTQLGFCSVYFMFM) form a helical membrane-spanning segment. The Extracellular segment spans residues 166-202 (ADNLQQIVEEAHFTSNVCQPRQSLVMTSILDTRFYML). A helical transmembrane segment spans residues 203–223 (TILPFLILLVLVQNPQVLSIF). Residues 224 to 225 (ST) are Cytoplasmic-facing. The chain crosses the membrane as a helical span at residues 226 to 246 (LATITTLSSLALIFEYLIQIP). Residues 247 to 259 (HHSHLPLVASWKT) lie on the Extracellular side of the membrane. A helical transmembrane segment spans residues 260–280 (FLLFFGTAIFTFEGVGMVLPL). Over 281-291 (KSQMKSPQQFP) the chain is Cytoplasmic. The helical transmembrane segment at 292–312 (AVLYLGMSFVIFLYICLGTLG) threads the bilayer. The Extracellular segment spans residues 313–344 (YMKFGADTQASITLNLPNCWLYQSVKLMYSVG). A helical transmembrane segment spans residues 345–365 (IFFTYALQFHVPAEIIVPYVV). The Cytoplasmic segment spans residues 366 to 374 (SRASENWAL). A helical transmembrane segment spans residues 375–395 (FIDLTVRAALVCLTCFSAVLI). At 396-399 (PRLD) the chain is on the extracellular side. A helical transmembrane segment spans residues 400–420 (LVISLVGSVSSSALALIIPPL). At 421 to 439 (LEIATFYSENISCTTIAKD) the chain is on the cytoplasmic side. Residues 440-460 (IMISILGLLGCVLGTYQALYE) form a helical membrane-spanning segment. Topologically, residues 461–477 (MTQQSRFPMLNSTNVHT) are extracellular.

It belongs to the amino acid/polyamine transporter 2 family.

It localises to the membrane. This Rattus norvegicus (Rat) protein is Proton-coupled amino acid transporter 3 (Slc36a3).